We begin with the raw amino-acid sequence, 229 residues long: PHO85 cyclin-5 (229 aa).

Over residues 1-24 the composition is skewed to basic and acidic residues; it reads MDGNHRFTPDSKEFNTVVKSKESS. The tract at residues 1 to 46 is disordered; it reads MDGNHRFTPDSKEFNTVVKSKESSTGRNPYQTPPLEHNGTHHQTNY.

Belongs to the cyclin family. PCL1,2 subfamily. In terms of assembly, forms a cyclin-CDK complex with PHO85.

Its function is as follows. Cyclin partner of the cyclin-dependent kinase (CDK) PHO85. Positively controls degradation of transcription factor GCN4 under favorable growth conditions. The PCL5-PHO85 cyclin-CDK holoenzyme phosphorylates GCN4, which is required for its degradation by the E3 ubiquitin ligase complex SCF(Cdc4). Amino acid starvation reduces PCL5-PHO85-associated GCN4 kinase activity and leads to stabilization of GCN4. In Saccharomyces cerevisiae (strain ATCC 204508 / S288c) (Baker's yeast), this protein is PHO85 cyclin-5 (PCL5).